Here is a 394-residue protein sequence, read N- to C-terminus: Guanine nucleotide-binding protein G(s) subunit alpha (394 aa).

Residues 1–25 (MGCLGDSKTEDQRNEEKAQREANKK) form a disordered region. G2 carries the N-palmitoyl glycine lipid modification. C3 carries the S-palmitoyl cysteine lipid modification. Residues 7 to 25 (SKTEDQRNEEKAQREANKK) are compositionally biased toward basic and acidic residues. The G-alpha domain maps to 39–394 (ATHRLLLLGA…RMHLRQYELL (356 aa)). The tract at residues 42–55 (RLLLLGAGESGKST) is G1 motif. 47 to 55 (GAGESGKST) provides a ligand contact to GTP. S54 is a binding site for Mg(2+). A disordered region spans residues 68–90 (FNGEGGEEDPQAARSNSDGEKAT). The interval 196–204 (DLLRCRVLT) is G2 motif. GTP is bound by residues 197–204 (LLRCRVLT), 223–227 (DVGGQ), 292–295 (NKQD), and A366. T204 provides a ligand contact to Mg(2+). The interval 219–228 (FHMFDVGGQR) is G3 motif. Positions 288-295 (ILFLNKQD) are G4 motif. A G5 motif region spans residues 364 to 369 (TCAVDT).

It belongs to the G-alpha family. G(s) subfamily. In terms of assembly, heterotrimeric G proteins are composed of 3 units; alpha, beta and gamma. The alpha chain contains the guanine nucleotide binding site. Interacts with CRY1; the interaction may block GPCR-mediated regulation of cAMP concentrations. Interacts with ADCY6 and stimulates its adenylyl cyclase activity. Interacts with ADCY2 and ADCY5. Stimulates the ADCY5 adenylyl cyclase activity. Interaction with SASH1.

It localises to the cell membrane. Guanine nucleotide-binding proteins (G proteins) function as transducers in numerous signaling pathways controlled by G protein-coupled receptors (GPCRs). Signaling involves the activation of adenylyl cyclases, resulting in increased levels of the signaling molecule cAMP. GNAS functions downstream of several GPCRs, including beta-adrenergic receptors. Stimulates the Ras signaling pathway via RAPGEF2. This chain is Guanine nucleotide-binding protein G(s) subunit alpha (GNAS), found in Cricetulus longicaudatus (Long-tailed dwarf hamster).